A 537-amino-acid chain; its full sequence is MAKQIIFGEKVRVSLKKGVDTLANTVRVTLGPKGHPVALERKWGAPTVIDDGVTIARDIELPDAFENMGAQLVKEAATRTSDAAGDGTTTSIVLAQAIINEAFKNIAAGAEPINLKRGIEKAVAALKAQLRKNSTPVKGKQQIVQVATITGKDPEIGNLIADVMDKVGKDGVITIEESRGLRYETSYVEGMQFDRGYISAYFVTDPGRMESVMEDATILMTDRKIETVAELLPALEKILQISKNLVIVAENVEAEALATLVVNKLRGNLNILAVKAPGYGDRQKAMLEDMAILTGGHVISKEAGRKLDSVTEADLGHARRIVSNKDKTTIIDGEGSAEAIKDRIKQIKAQIEETESAFDREKLQERQAALVGGVAVIAVGAATETEMKERKARVEDALAATRAAIEEGILPGGGTGLLNALPCLDALKLEGDEATGVNIVRKALIEPVRWIATNAGKDGNVIVDKVKNSPVGHGYNAENDVFGDMAEMGIIDPTMVVRSALENAASIANMVLITDSLVADIQEKAPAAPGPEAAGMY.

Residues 29-32 (TLGP), 86-90 (DGTTT), G413, and D492 contribute to the ATP site.

The protein belongs to the chaperonin (HSP60) family. As to quaternary structure, forms a cylinder of 14 subunits composed of two heptameric rings stacked back-to-back. Interacts with the co-chaperonin GroES.

Its subcellular location is the cytoplasm. It catalyses the reaction ATP + H2O + a folded polypeptide = ADP + phosphate + an unfolded polypeptide.. Its function is as follows. Together with its co-chaperonin GroES, plays an essential role in assisting protein folding. The GroEL-GroES system forms a nano-cage that allows encapsulation of the non-native substrate proteins and provides a physical environment optimized to promote and accelerate protein folding. The sequence is that of Chaperonin GroEL from Dehalococcoides mccartyi (strain CBDB1).